We begin with the raw amino-acid sequence, 694 residues long: Elongation factor G (694 aa).

One can recognise a tr-type G domain in the interval 8 to 282 (DRLRNIGIMA…AIVDYLPSPL (275 aa)). Residues 17 to 24 (AHIDAGKT), 81 to 85 (DTPGH), and 135 to 138 (NKMD) contribute to the GTP site. A disordered region spans residues 284–303 (IPPVQGTDPETGEPAERKAD).

The protein belongs to the TRAFAC class translation factor GTPase superfamily. Classic translation factor GTPase family. EF-G/EF-2 subfamily.

The protein resides in the cytoplasm. Catalyzes the GTP-dependent ribosomal translocation step during translation elongation. During this step, the ribosome changes from the pre-translocational (PRE) to the post-translocational (POST) state as the newly formed A-site-bound peptidyl-tRNA and P-site-bound deacylated tRNA move to the P and E sites, respectively. Catalyzes the coordinated movement of the two tRNA molecules, the mRNA and conformational changes in the ribosome. This chain is Elongation factor G, found in Symbiobacterium thermophilum (strain DSM 24528 / JCM 14929 / IAM 14863 / T).